Reading from the N-terminus, the 536-residue chain is Chaperonin GroEL (536 aa).

ATP contacts are provided by residues T29–P32, D86–T90, G412, and D493.

It belongs to the chaperonin (HSP60) family. As to quaternary structure, forms a cylinder of 14 subunits composed of two heptameric rings stacked back-to-back. Interacts with the co-chaperonin GroES.

It is found in the cytoplasm. The enzyme catalyses ATP + H2O + a folded polypeptide = ADP + phosphate + an unfolded polypeptide.. Functionally, together with its co-chaperonin GroES, plays an essential role in assisting protein folding. The GroEL-GroES system forms a nano-cage that allows encapsulation of the non-native substrate proteins and provides a physical environment optimized to promote and accelerate protein folding. The polypeptide is Chaperonin GroEL (Onion yellows phytoplasma (strain OY-M)).